The following is a 90-amino-acid chain: RNA-binding protein Hfq (90 aa).

The region spanning 9-68 (DPFLNALRRERVPVSIYLVNGIKLQGQVESFDQFVILLKNTVSQMVYKHAISTVVPARPF) is the Sm domain. Positions 71–90 (TGHQNAQGGYGPQDDVPSGE) are disordered.

Belongs to the Hfq family. Homohexamer.

Its function is as follows. RNA chaperone that binds small regulatory RNA (sRNAs) and mRNAs to facilitate mRNA translational regulation in response to envelope stress, environmental stress and changes in metabolite concentrations. Also binds with high specificity to tRNAs. The chain is RNA-binding protein Hfq from Shewanella putrefaciens (strain CN-32 / ATCC BAA-453).